An 899-amino-acid polypeptide reads, in one-letter code: DNA mismatch repair protein MutS (899 aa).

Residues Met1–Arg20 are disordered. Gly631–Ser638 is a binding site for ATP. Positions Pro832–Pro852 are disordered. The segment covering Gly843–Pro852 has biased composition (low complexity).

The protein belongs to the DNA mismatch repair MutS family.

Functionally, this protein is involved in the repair of mismatches in DNA. It is possible that it carries out the mismatch recognition step. This protein has a weak ATPase activity. The polypeptide is DNA mismatch repair protein MutS (Cupriavidus necator (strain ATCC 17699 / DSM 428 / KCTC 22496 / NCIMB 10442 / H16 / Stanier 337) (Ralstonia eutropha)).